The following is a 236-amino-acid chain: Bacterial rhodopsin CSR3 (236 aa).

Over methionine 1 to alanine 3 the chain is Extracellular. The helical transmembrane segment at valine 4–leucine 25 threads the bilayer. Residues tyrosine 26 to glutamate 34 lie on the Cytoplasmic side of the membrane. A helical membrane pass occupies residues arginine 35–alanine 56. At phenylalanine 57–valine 70 the chain is on the extracellular side. Residues glycine 71–alanine 92 form a helical membrane-spanning segment. At glycine 93–serine 95 the chain is on the cytoplasmic side. Residues arginine 96–valine 118 traverse the membrane as a helical segment. At alanine 119 to threonine 122 the chain is on the extracellular side. The helical transmembrane segment at leucine 123–valine 150 threads the bilayer. At proline 151–aspartate 153 the chain is on the cytoplasmic side. Residues proline 154–glycine 181 form a helical membrane-spanning segment. Residues proline 182–threonine 189 are Extracellular-facing. Residues tyrosine 190 to lysine 222 form a helical membrane-spanning segment. An N6-(retinylidene)lysine modification is found at lysine 205. Topologically, residues leucine 223–aspartate 236 are cytoplasmic.

It belongs to the archaeal/bacterial/fungal opsin family.

It is found in the cell membrane. The protein is Bacterial rhodopsin CSR3 of Haloarcula vallismortis (Halobacterium vallismortis).